The primary structure comprises 352 residues: MKDLQLVLFVLGAIAIIAVLVHGFWSIRKQQPKSMKQSPMAGFYKDQAKRRDSEGFDADGIGQVRVRKPGEVEETVIKPVLKTNLSQKPHSGTTKLTDTPLQDSLRQPGPHKTEPEHVEPKVVQPAQQSLFVGDDVKPAPTASTSMNTPKKIFNPSTSTAKLESYTGKPVAARPEPIKPPIQPAAPKVDVKAEVEEVKAEVEVKSTLKADAPVNEPVEPTDVLVLHIFAKAGEQIQGAELLPSLLSLNFKFGDMDIFHRHIDNAGTGKVLFSLANMLKPGIFDPDNMEQFVTQGVVLFMTLPGYGDPLMNFTIMLNSAYQIAEDLGAELLDGQRQPWSDATKKDYLRRLNAA.

Topologically, residues 1-6 (MKDLQL) are periplasmic. The chain crosses the membrane as a helical span at residues 7–27 (VLFVLGAIAIIAVLVHGFWSI). At 28–352 (RKQQPKSMKQ…KDYLRRLNAA (325 aa)) the chain is on the cytoplasmic side. 2 disordered regions span residues 78 to 120 (KPVL…HVEP) and 138 to 160 (PAPTASTSMNTPKKIFNPSTSTA). Over residues 83 to 105 (TNLSQKPHSGTTKLTDTPLQDSL) the composition is skewed to polar residues. Positions 111-120 (HKTEPEHVEP) are enriched in basic and acidic residues. A compositionally biased stretch (polar residues) spans 141 to 160 (TASTSMNTPKKIFNPSTSTA).

This sequence belongs to the ZipA family. In terms of assembly, interacts with FtsZ via their C-terminal domains.

It localises to the cell inner membrane. Its function is as follows. Essential cell division protein that stabilizes the FtsZ protofilaments by cross-linking them and that serves as a cytoplasmic membrane anchor for the Z ring. Also required for the recruitment to the septal ring of downstream cell division proteins. This Shewanella frigidimarina (strain NCIMB 400) protein is Cell division protein ZipA.